The following is a 206-amino-acid chain: Sclerostin domain-containing protein 1 (206 aa).

Positions 1–22 (MLLSAIHFYGLLLACTFTRSYS) are cleaved as a signal peptide. The tract at residues 40 to 68 (APASPSSNSTLNQARNGGRHYAGTGSDRN) is disordered. Residues 43 to 54 (SPSSNSTLNQAR) show a composition bias toward polar residues. N47 carries N-linked (GlcNAc...) asparagine glycosylation. 4 disulfide bridges follow: C75/C133, C89/C147, C100/C163, and C104/C165. The CTCK domain maps to 75–170 (CRELRSTKYI…TACKCKRYTR (96 aa)). N-linked (GlcNAc...) asparagine glycosylation occurs at N173. The interval 176 to 206 (SHNFEGTSQAKPVQHHKERKRASKSSKHSTS) is disordered. Residues 188 to 206 (VQHHKERKRASKSSKHSTS) are compositionally biased toward basic residues.

The protein belongs to the sclerostin family. In terms of assembly, interacts with LRP6.

It localises to the secreted. Its function is as follows. Can activate or inhibit Wnt signaling in a context-dependent manner. Activates the canonical Wnt pathway whereby acts through Disheveled proteins and beta-catenin. Antagonises Wnt signaling through the canonical pathways presumably by blocking accessibility of certain WNTs to their receptors. Induces posterior neural markers via components of the canonical Wnt pathway. The protein is Sclerostin domain-containing protein 1 (SOSTDC1) of Gallus gallus (Chicken).